The chain runs to 219 residues: 2-hydroxy-3-keto-5-methylthiopentenyl-1-phosphate phosphatase (219 aa).

This sequence belongs to the HAD-like hydrolase superfamily. MtnX family.

The enzyme catalyses 2-hydroxy-5-methylsulfanyl-3-oxopent-1-enyl phosphate + H2O = 1,2-dihydroxy-5-(methylsulfanyl)pent-1-en-3-one + phosphate. The protein operates within amino-acid biosynthesis; L-methionine biosynthesis via salvage pathway; L-methionine from S-methyl-5-thio-alpha-D-ribose 1-phosphate: step 4/6. Its function is as follows. Dephosphorylates 2-hydroxy-3-keto-5-methylthiopentenyl-1-phosphate (HK-MTPenyl-1-P) yielding 1,2-dihydroxy-3-keto-5-methylthiopentene (DHK-MTPene). The polypeptide is 2-hydroxy-3-keto-5-methylthiopentenyl-1-phosphate phosphatase (Bacillus mycoides (strain KBAB4) (Bacillus weihenstephanensis)).